Consider the following 363-residue polypeptide: Aminomethyltransferase (363 aa).

The protein belongs to the GcvT family. As to quaternary structure, the glycine cleavage system is composed of four proteins: P, T, L and H.

The catalysed reaction is N(6)-[(R)-S(8)-aminomethyldihydrolipoyl]-L-lysyl-[protein] + (6S)-5,6,7,8-tetrahydrofolate = N(6)-[(R)-dihydrolipoyl]-L-lysyl-[protein] + (6R)-5,10-methylene-5,6,7,8-tetrahydrofolate + NH4(+). In terms of biological role, the glycine cleavage system catalyzes the degradation of glycine. The protein is Aminomethyltransferase of Teredinibacter turnerae (strain ATCC 39867 / T7901).